The primary structure comprises 900 residues: Alanine--tRNA ligase (900 aa).

Positions 567, 571, 671, and 675 each coordinate Zn(2+).

This sequence belongs to the class-II aminoacyl-tRNA synthetase family. The cofactor is Zn(2+).

The protein resides in the cytoplasm. It catalyses the reaction tRNA(Ala) + L-alanine + ATP = L-alanyl-tRNA(Ala) + AMP + diphosphate. Its function is as follows. Catalyzes the attachment of alanine to tRNA(Ala) in a two-step reaction: alanine is first activated by ATP to form Ala-AMP and then transferred to the acceptor end of tRNA(Ala). Also edits incorrectly charged Ser-tRNA(Ala) and Gly-tRNA(Ala) via its editing domain. This Mycoplasma pneumoniae (strain ATCC 29342 / M129 / Subtype 1) (Mycoplasmoides pneumoniae) protein is Alanine--tRNA ligase.